A 553-amino-acid chain; its full sequence is Hydroxylamine reductase (553 aa).

[2Fe-2S] cluster-binding residues include Cys3, Cys6, Cys18, and Cys25. Hybrid [4Fe-2O-2S] cluster contacts are provided by His252, Glu276, Cys320, Cys408, Cys436, Cys461, Glu495, and Lys497. The residue at position 408 (Cys408) is a Cysteine persulfide.

This sequence belongs to the HCP family. [2Fe-2S] cluster serves as cofactor. Requires hybrid [4Fe-2O-2S] cluster as cofactor.

The protein localises to the cytoplasm. It carries out the reaction A + NH4(+) + H2O = hydroxylamine + AH2 + H(+). Functionally, catalyzes the reduction of hydroxylamine to form NH(3) and H(2)O. The polypeptide is Hydroxylamine reductase (Aliivibrio fischeri (strain MJ11) (Vibrio fischeri)).